A 90-amino-acid chain; its full sequence is Large ribosomal subunit protein bL27 (90 aa).

Residues 1-22 (MAHKKAGGSTRNGRDSNPKMLG) form a disordered region.

It belongs to the bacterial ribosomal protein bL27 family.

This is Large ribosomal subunit protein bL27 from Coxiella burnetii (strain CbuK_Q154) (Coxiella burnetii (strain Q154)).